The primary structure comprises 426 residues: Transcription factor bHLH60 (426 aa).

Composition is skewed to polar residues over residues 117–137 (QNGN…SSAN) and 148–172 (TDSS…QNNR). The segment at 117-201 (QNGNISGETP…SSEENEKLPY (85 aa)) is disordered. Residues 191-200 (KSSEENEKLP) show a composition bias toward basic and acidic residues. The bHLH domain maps to 210–307 (QATDSHSLAE…DEIINHVQSL (98 aa)). Positions 367–398 (HRQLQQPPTQQWPFDGLNQPVWGREEDQAHGN) are disordered.

Homodimer. Expressed constitutively in roots, leaves, stems, and flowers.

The protein localises to the nucleus. The polypeptide is Transcription factor bHLH60 (BHLH60) (Arabidopsis thaliana (Mouse-ear cress)).